Here is a 636-residue protein sequence, read N- to C-terminus: MLKITLKDGSVKEIEKGSNVLDLAKSISNRLAKEAVGAKVDGKTVGLNKELNENCEVEILSFEDDEGCDIYRHTSSHILAHAVKRLYDNVKLGIGPPIKDGFYYDFDLEHSLSDKDLEDIKKEMKKIIKEDLPIERKVYKRDEAIEMFKEMGEDYKIELIQDLGEDEEICCYQQGDFIDLCQGPHLPSTGKIKDTALDLLKVAGAYWRGDENRAMLQRIYGTSFIKKSQLEEYIQRLEEAKKREHRKLGKELDLFSFHEEAPGSPFFHNNGMIVINELIDFWRREHRKAGYQEISTPIILNRGLWERSGHWDHFQENMYFTEIDDEDFAVKPMNCPGAMLVYNNNMYSYRDFPLRVAELGKVHRHELSGALHGLLRARSFTQDDAHIFMLPSQVEEELENVINLVDRFYSVFGFNYYVELSTKPEKAMGSDEIWDRAINALKSVLEKRGIKYIVNEGDGAFYGPKIDFQLEDAIGRSWQCSTIQLDFLLPERFDLTYIGEDGQKHRPVMIHRVIYGAIERFFALLIEHYEGKFPLWLAPRQAVIIPIADRHMEYGKDITKQLESEGIRADLDQRNEKIGYKIRDAQLKKVPYMLIVGDDEVENKTVSVRTREDGDIGSKSVAELVDEIKVEIDDMD.

The TGS domain maps to 1-61 (MLKITLKDGS…NENCEVEILS (61 aa)). Positions 244–534 (EHRKLGKELD…LIEHYEGKFP (291 aa)) are catalytic. Residues C335, H386, and H511 each contribute to the Zn(2+) site.

It belongs to the class-II aminoacyl-tRNA synthetase family. As to quaternary structure, homodimer. Zn(2+) is required as a cofactor.

It localises to the cytoplasm. It carries out the reaction tRNA(Thr) + L-threonine + ATP = L-threonyl-tRNA(Thr) + AMP + diphosphate + H(+). In terms of biological role, catalyzes the attachment of threonine to tRNA(Thr) in a two-step reaction: L-threonine is first activated by ATP to form Thr-AMP and then transferred to the acceptor end of tRNA(Thr). Also edits incorrectly charged L-seryl-tRNA(Thr). This Natranaerobius thermophilus (strain ATCC BAA-1301 / DSM 18059 / JW/NM-WN-LF) protein is Threonine--tRNA ligase.